A 214-amino-acid chain; its full sequence is MHFLVVYILIHFHAYRGMAALPLFSTLPKITSCCDSYVVINSSTSVSSLISTCLDGEILFQNEGQKFCRPLTDNRTIVYTMQDQVQKPLSVTWMDFNLVISDYGRDVINNLTKSAMLARKNGPRYLQMENGPRYLQMETRISDLFRHECYQDNYYVLDKKLQMFYPTTHSNELLFYPSEATLPSPWQEPPFSSPWPEPTFPSRWYWLLLNYTNY.

Positions 1–19 (MHFLVVYILIHFHAYRGMA) are cleaved as a signal peptide. N41, N74, N110, and N210 each carry an N-linked (GlcNAc...) asparagine; by host glycan.

As to quaternary structure, interacts with isoform gQ1. The heterodimer gQ1-gQ2 associates with the glycoprotein complex gH-gL to form a tetrameric complex. The gH/gL/gQ1/gQ2 complex binds to human receptor CD46. In terms of processing, glycosylated by host.

The protein resides in the virion membrane. It is found in the host endoplasmic reticulum-Golgi intermediate compartment. In terms of biological role, plays a role in virus entry by participating in host receptor binding at the cell surface. This is Glycoprotein Q2 from Human herpesvirus 6A (strain Uganda-1102) (HHV-6 variant A).